The primary structure comprises 301 residues: ATP synthase gamma chain (301 aa).

The protein belongs to the ATPase gamma chain family. In terms of assembly, F-type ATPases have 2 components, CF(1) - the catalytic core - and CF(0) - the membrane proton channel. CF(1) has five subunits: alpha(3), beta(3), gamma(1), delta(1), epsilon(1). CF(0) has three main subunits: a, b and c.

The protein localises to the cell inner membrane. Its function is as follows. Produces ATP from ADP in the presence of a proton gradient across the membrane. The gamma chain is believed to be important in regulating ATPase activity and the flow of protons through the CF(0) complex. The protein is ATP synthase gamma chain of Bordetella parapertussis (strain 12822 / ATCC BAA-587 / NCTC 13253).